The chain runs to 50 residues: YVGQRLCGSQLVDTLYSVCKHRGFYRPSEGIVDQCCTNICSRNQLLTYCN.

Intrachain disulfides connect C7–C36, C19–C49, and C35–C40.

It belongs to the insulin family. In terms of assembly, heterodimer of a B chain and an A chain linked by two disulfide bonds.

It is found in the secreted. Its function is as follows. Insulin decreases blood glucose concentration. It increases cell permeability to monosaccharides, amino acids and fatty acids. It accelerates glycolysis, the pentose phosphate cycle, and glycogen synthesis in liver. This chain is Insulin (INS), found in Proechimys guairae (Guaira spiny rat).